A 251-amino-acid chain; its full sequence is Flagellar L-ring protein (251 aa).

The N-terminal stretch at 1–17 is a signal peptide; sequence MIRKLAALIVAAAALQA. The N-palmitoyl cysteine moiety is linked to residue C18. The S-diacylglycerol cysteine moiety is linked to residue C18.

It belongs to the FlgH family. As to quaternary structure, the basal body constitutes a major portion of the flagellar organelle and consists of four rings (L,P,S, and M) mounted on a central rod.

The protein resides in the cell outer membrane. The protein localises to the bacterial flagellum basal body. Its function is as follows. Assembles around the rod to form the L-ring and probably protects the motor/basal body from shearing forces during rotation. This Maricaulis maris (strain MCS10) (Caulobacter maris) protein is Flagellar L-ring protein.